Reading from the N-terminus, the 112-residue chain is Putative iron-sulfur cluster insertion protein ErpA (112 aa).

Iron-sulfur cluster-binding residues include Cys-40, Cys-104, and Cys-106.

The protein belongs to the HesB/IscA family. As to quaternary structure, homodimer. The cofactor is iron-sulfur cluster.

Functionally, required for insertion of 4Fe-4S clusters. The polypeptide is Putative iron-sulfur cluster insertion protein ErpA (Neisseria gonorrhoeae (strain ATCC 700825 / FA 1090)).